A 374-amino-acid chain; its full sequence is Heme A synthase (374 aa).

A run of 8 helical transmembrane segments spans residues 22-42, 107-127, 135-155, 172-192, 209-229, 265-285, 306-326, and 327-347; these read VAVW…IGAI, LWGR…WVRG, PTLA…WFMV, LHLG…LGLL, AWAA…VAGI, AAVQ…VLSL, AAAT…VVWI, and PLAT…VWTL. Histidine 271 is a heme binding site. Histidine 332 contributes to the heme binding site.

Belongs to the COX15/CtaA family. Type 2 subfamily. In terms of assembly, interacts with CtaB. It depends on heme b as a cofactor.

The protein localises to the cell membrane. The catalysed reaction is Fe(II)-heme o + 2 A + H2O = Fe(II)-heme a + 2 AH2. The protein operates within porphyrin-containing compound metabolism; heme A biosynthesis; heme A from heme O: step 1/1. Functionally, catalyzes the conversion of heme O to heme A by two successive hydroxylations of the methyl group at C8. The first hydroxylation forms heme I, the second hydroxylation results in an unstable dihydroxymethyl group, which spontaneously dehydrates, resulting in the formyl group of heme A. This chain is Heme A synthase, found in Rhodospirillum centenum (strain ATCC 51521 / SW).